Reading from the N-terminus, the 98-residue chain is Co-chaperonin GroES (98 aa).

The protein belongs to the GroES chaperonin family. As to quaternary structure, heptamer of 7 subunits arranged in a ring. Interacts with the chaperonin GroEL.

It is found in the cytoplasm. Its function is as follows. Together with the chaperonin GroEL, plays an essential role in assisting protein folding. The GroEL-GroES system forms a nano-cage that allows encapsulation of the non-native substrate proteins and provides a physical environment optimized to promote and accelerate protein folding. GroES binds to the apical surface of the GroEL ring, thereby capping the opening of the GroEL channel. This Clavibacter michiganensis subsp. michiganensis (strain NCPPB 382) protein is Co-chaperonin GroES.